Here is a 251-residue protein sequence, read N- to C-terminus: MYVLVLSLGDPVSRTFLELHPMPLVETRGDIEVRKYGEIPAVVYKGEPTEFYREDILASLGKYAIFISRHEMSNPRPLFTVHTPGSWPDVSVANPRLASALFRALCKHAYEPFECAFEATHHAPNTSLVSATFIEVGSTEAEWRDKRAVGVLAQALEEALTKEFEGPTPTMAIGDLHYVTISDSVLRGEFDLGHVVPKYINITTNIVENILKKHTISIKKTIIFRKNIKNPIRTEIIELLRAKGIEVTLKG.

It belongs to the DtdA deacylase family. In terms of assembly, monomer. Zn(2+) serves as cofactor.

It catalyses the reaction a D-aminoacyl-tRNA + H2O = a tRNA + a D-alpha-amino acid + H(+). The catalysed reaction is glycyl-tRNA(Ala) + H2O = tRNA(Ala) + glycine + H(+). In terms of biological role, D-aminoacyl-tRNA deacylase with broad substrate specificity. By recycling D-aminoacyl-tRNA to D-amino acids and free tRNA molecules, this enzyme counteracts the toxicity associated with the formation of D-aminoacyl-tRNA entities in vivo. This Pyrobaculum aerophilum (strain ATCC 51768 / DSM 7523 / JCM 9630 / CIP 104966 / NBRC 100827 / IM2) protein is D-aminoacyl-tRNA deacylase.